The sequence spans 360 residues: MAPAEKAFVLRKKMDTAIEDRPGQTLTDDHQVKVAIKATGICGSDVHYWKEGGIGDFILKKPMILGHESAGVVVEVGKGVSSLKPGDPVAVEPGCVCRLCDYCRSGRYNLCPHMEFAATPPYDGTLRTYYITTEDFCTKLPKQISVEEGALFEPMSVAVHAMTRGNLKCGSRVLVMGCGTVGLLMMAVAKAYGAIDIVAVDASPSRVEFAQKYVGAKPFTPIAAKENESLPDYAQRYKQAIIEKYGEFDFAVDATGVGICIHTAVLALKRGGTFVQAGNGKPVIDFPINHIINYEINVLGSFRYAHGCYKQSLFLVSNGLVDVKPLITHRFAFKDALKAYETVASGEEGVLKVIIGGPDA.

Residue cysteine 42 coordinates Zn(2+). Tyrosine 48 provides a ligand contact to substrate. 2 residues coordinate Zn(2+): histidine 67 and glutamate 68. Glutamate 153 serves as a coordination point for substrate. NAD(+)-binding positions include aspartate 201, arginine 206, alanine 277 to asparagine 279, and serine 301 to arginine 303. Residues arginine 303 and tyrosine 304 each contribute to the substrate site.

It belongs to the zinc-containing alcohol dehydrogenase family. As to quaternary structure, homotetramer. It depends on Zn(2+) as a cofactor.

The catalysed reaction is keto-D-fructose + NADH + H(+) = D-sorbitol + NAD(+). Polyol dehydrogenase that catalyzes the reversible NAD(+)-dependent oxidation of various sugar alcohols. Is active with D-sorbitol (D-glucitol) as substrate, leading to the C2-oxidized product D-fructose. Suppresses growth arrest induced by a p53 tumor mutant in fission yeast. The polypeptide is Sorbitol dehydrogenase (tms1) (Schizosaccharomyces pombe (strain 972 / ATCC 24843) (Fission yeast)).